A 166-amino-acid chain; its full sequence is Small ribosomal subunit protein uS5 (166 aa).

Positions 11–74 (LQEKLIAVNR…EKARRNMMNV (64 aa)) constitute an S5 DRBM domain.

Belongs to the universal ribosomal protein uS5 family. Part of the 30S ribosomal subunit. Contacts proteins S4 and S8.

With S4 and S12 plays an important role in translational accuracy. Its function is as follows. Located at the back of the 30S subunit body where it stabilizes the conformation of the head with respect to the body. This Sodalis glossinidius (strain morsitans) protein is Small ribosomal subunit protein uS5.